We begin with the raw amino-acid sequence, 414 residues long: Histidine--tRNA ligase (414 aa).

The protein belongs to the class-II aminoacyl-tRNA synthetase family. In terms of assembly, homodimer.

Its subcellular location is the cytoplasm. It catalyses the reaction tRNA(His) + L-histidine + ATP = L-histidyl-tRNA(His) + AMP + diphosphate + H(+). This is Histidine--tRNA ligase (hisS) from Mycoplasma genitalium (strain ATCC 33530 / DSM 19775 / NCTC 10195 / G37) (Mycoplasmoides genitalium).